The sequence spans 248 residues: 1-(5-phosphoribosyl)-5-[(5-phosphoribosylamino)methylideneamino] imidazole-4-carboxamide isomerase (248 aa).

Asp8 acts as the Proton acceptor in catalysis. Asp129 acts as the Proton donor in catalysis.

It belongs to the HisA/HisF family.

Its subcellular location is the cytoplasm. It catalyses the reaction 1-(5-phospho-beta-D-ribosyl)-5-[(5-phospho-beta-D-ribosylamino)methylideneamino]imidazole-4-carboxamide = 5-[(5-phospho-1-deoxy-D-ribulos-1-ylimino)methylamino]-1-(5-phospho-beta-D-ribosyl)imidazole-4-carboxamide. The protein operates within amino-acid biosynthesis; L-histidine biosynthesis; L-histidine from 5-phospho-alpha-D-ribose 1-diphosphate: step 4/9. The sequence is that of 1-(5-phosphoribosyl)-5-[(5-phosphoribosylamino)methylideneamino] imidazole-4-carboxamide isomerase from Desulfitobacterium hafniense (strain Y51).